The following is a 2492-amino-acid chain: Talin-A (2492 aa).

The FERM domain occupies 84 to 365; the sequence is RPQKFKLLDG…GYIEIIMKAR (282 aa). The region spanning 2250-2492 is the I/LWEQ domain; sequence EEDNVLEDLE…NSRKQNYNKN (243 aa).

Its subcellular location is the cytoplasm. It localises to the cytoskeleton. The protein resides in the cell cortex. Actin-binding protein that may be involved in the control of cell motility and chemotaxis. This is Talin-A (talA) from Dictyostelium discoideum (Social amoeba).